A 398-amino-acid polypeptide reads, in one-letter code: Cation channel sperm-associated protein 3 (398 aa).

Topologically, residues 1–48 (MSQHRHQRHSRVISSSPVDTTSVGFCPTFKKFKRNDDECRAFVKRVIM) are cytoplasmic. A helical membrane pass occupies residues 49 to 71 (SRFFKIIMISTVTSNAFFMALWT). Topologically, residues 72-80 (SYDIRYRLF) are extracellular. A helical transmembrane segment spans residues 81-107 (RLLEFSEIFFVSICTSELSMKVYVDPI). A topological domain (cytoplasmic) is located at residue N108. Residues 109–131 (YWKNGYNLLDVIIIIVMFLPYAL) traverse the membrane as a helical segment. The Extracellular segment spans residues 132 to 143 (RQLMGKQFTYLY). A helical transmembrane segment spans residues 144-160 (IADGMQSLRILKLIGYS). At 161-168 (QGIRTLIT) the chain is on the cytoplasmic side. The chain crosses the membrane as a helical span at residues 169–195 (AVGQTVYTVASVLLLLFLLMYIFAILG). Over 196-216 (FCLFGSPDNGDHDNWGNLAAA) the chain is Extracellular. The helical; Pore-forming intramembrane region spans 217-236 (FFTLFSLATVDGWTDLQKQL). Over 237 to 242 (DNREFA) the chain is Extracellular. A helical transmembrane segment spans residues 243–268 (LSRAFTIIFILLASFIFLNMFVGVMI). At 269–398 (MHTEDSIRKF…PQSLEKVDEK (130 aa)) the chain is on the cytoplasmic side.

It belongs to the cation channel sperm-associated (TC 1.A.1.19) family. As to quaternary structure, component of the CatSper complex or CatSpermasome composed of the core pore-forming members CATSPER1, CATSPER2, CATSPER3 and CATSPER4 as well as auxiliary members CATSPERB, CATSPERG, CATSPERD, CATSPERE, CATSPERZ, C2CD6/CATSPERT, TMEM249, TMEM262 and EFCAB9. HSPA1 may be an additional auxiliary complex member. The core complex members CATSPER1, CATSPER2, CATSPER3 and CATSPER4 form a heterotetrameric channel. The auxiliary CATSPERB, CATSPERG, CATSPERD and CATSPERE subunits form a pavilion-like structure over the pore which stabilizes the complex through interactions with CATSPER4, CATSPER3, CATSPER1 and CATSPER2 respectively. TMEM262/CATSPERH interacts with CATSPERB, further stabilizing the complex. C2CD6/CATSPERT interacts at least with CATSPERD and is required for targeting the CatSper complex in the flagellar membrane. In terms of tissue distribution, testis-specific.

It localises to the cell projection. The protein resides in the cilium. Its subcellular location is the flagellum membrane. The enzyme catalyses Ca(2+)(in) = Ca(2+)(out). With respect to regulation, the CatSper calcium channel is indirectly activated by extracellular progesterone and prostaglandins following the sequence: progesterone &gt; PGF1-alpha = PGE1 &gt; PGA1 &gt; PGE2 &gt;&gt; PGD2. The CatSper calcium channel is directly inhibited by endocannabinoid 2-arachidonoylglycerol (2AG). Indirect activation by progesterone takes place via the following mechanism: progesterone binds and activates the acylglycerol lipase ABHD2, which in turn mediates hydrolysis of 2AG inhibitor, relieving inhibition of the CatSper channel. The primary effect of progesterone activation is to shift voltage dependence towards more physiological, negative membrane potentials; it is not mediated by metabotropic receptors and second messengers. Sperm capacitation enhances the effect of progesterone by providing additional negative shift. Also activated by the elevation of intracellular pH. Functionally, pore-forming subunit of the CatSper complex, a sperm-specific voltage-gated calcium channel that plays a central role in calcium-dependent physiological responses essential for successful fertilization, such as sperm hyperactivation, acrosome reaction and chemotaxis towards the oocyte. This is Cation channel sperm-associated protein 3 (CATSPER3) from Homo sapiens (Human).